Reading from the N-terminus, the 335-residue chain is Putative type I specificity subunit S.MpnORF89P (335 aa).

This sequence belongs to the type-I restriction system S methylase family. The methyltransferase is composed of M and S polypeptides.

The specificity (S) subunit of a type I methyltransferase (MTase); this subunit dictates DNA sequence specificity. The single R subunit has multiple frameshifts and is probably not expressed. This is Putative type I specificity subunit S.MpnORF89P from Mycoplasma pneumoniae (strain ATCC 29342 / M129 / Subtype 1) (Mycoplasmoides pneumoniae).